The primary structure comprises 448 residues: Trigger factor (448 aa).

One can recognise a PPIase FKBP-type domain in the interval 172 to 257 (GDRVTVDFVG…MKKIEWPHLP (86 aa)).

The protein belongs to the FKBP-type PPIase family. Tig subfamily.

Its subcellular location is the cytoplasm. The catalysed reaction is [protein]-peptidylproline (omega=180) = [protein]-peptidylproline (omega=0). Involved in protein export. Acts as a chaperone by maintaining the newly synthesized protein in an open conformation. Functions as a peptidyl-prolyl cis-trans isomerase. The polypeptide is Trigger factor (Burkholderia ambifaria (strain ATCC BAA-244 / DSM 16087 / CCUG 44356 / LMG 19182 / AMMD) (Burkholderia cepacia (strain AMMD))).